A 450-amino-acid polypeptide reads, in one-letter code: Phosphoglucosamine mutase (450 aa).

S101 acts as the Phosphoserine intermediate in catalysis. Positions 101, 240, 242, and 244 each coordinate Mg(2+). S101 is subject to Phosphoserine.

This sequence belongs to the phosphohexose mutase family. It depends on Mg(2+) as a cofactor. Post-translationally, activated by phosphorylation.

It carries out the reaction alpha-D-glucosamine 1-phosphate = D-glucosamine 6-phosphate. Its function is as follows. Catalyzes the conversion of glucosamine-6-phosphate to glucosamine-1-phosphate. The protein is Phosphoglucosamine mutase of Streptococcus uberis (strain ATCC BAA-854 / 0140J).